The primary structure comprises 735 residues: Catalase-peroxidase (735 aa).

The segment at 1 to 31 is disordered; it reads MENNTNPISGQGKCPFSGGAAKQSAGAGTRN. Low complexity predominate over residues 17–28; that stretch reads SGGAAKQSAGAG. Positions 103 to 226 form a cross-link, tryptophyl-tyrosyl-methioninium (Trp-Tyr) (with M-252); the sequence is WHSAGTYRVA…LAAVQMGLIY (124 aa). His-104 serves as the catalytic Proton acceptor. Positions 226–252 form a cross-link, tryptophyl-tyrosyl-methioninium (Tyr-Met) (with W-103); that stretch reads YVNPEGPNGNPDPLASARDIRETFARM. His-267 contributes to the heme b binding site. The disordered stretch occupies residues 352–371; sequence KPKNGAGAGTVPDAHNSSKS.

Belongs to the peroxidase family. Peroxidase/catalase subfamily. In terms of assembly, homodimer or homotetramer. The cofactor is heme b. In terms of processing, formation of the three residue Trp-Tyr-Met cross-link is important for the catalase, but not the peroxidase activity of the enzyme.

It catalyses the reaction H2O2 + AH2 = A + 2 H2O. The enzyme catalyses 2 H2O2 = O2 + 2 H2O. Its function is as follows. Bifunctional enzyme with both catalase and broad-spectrum peroxidase activity. The sequence is that of Catalase-peroxidase from Flavobacterium psychrophilum (strain ATCC 49511 / DSM 21280 / CIP 103535 / JIP02/86).